The chain runs to 263 residues: Hydroxyacylglutathione hydrolase (263 aa).

His60, His62, Asp64, His65, His120, Asp137, and His175 together coordinate Zn(2+).

This sequence belongs to the metallo-beta-lactamase superfamily. Glyoxalase II family. Monomer. The cofactor is Zn(2+).

It carries out the reaction an S-(2-hydroxyacyl)glutathione + H2O = a 2-hydroxy carboxylate + glutathione + H(+). The protein operates within secondary metabolite metabolism; methylglyoxal degradation; (R)-lactate from methylglyoxal: step 2/2. In terms of biological role, thiolesterase that catalyzes the hydrolysis of S-D-lactoyl-glutathione to form glutathione and D-lactic acid. The polypeptide is Hydroxyacylglutathione hydrolase (Shewanella pealeana (strain ATCC 700345 / ANG-SQ1)).